The chain runs to 352 residues: Chorismate synthase (352 aa).

Arg48 serves as a coordination point for NADP(+). Residues 125-127 (RSS), 238-239 (NA), Gly278, 293-297 (KPTSS), and Arg319 each bind FMN.

Belongs to the chorismate synthase family. Homotetramer. The cofactor is FMNH2.

It carries out the reaction 5-O-(1-carboxyvinyl)-3-phosphoshikimate = chorismate + phosphate. It participates in metabolic intermediate biosynthesis; chorismate biosynthesis; chorismate from D-erythrose 4-phosphate and phosphoenolpyruvate: step 7/7. Functionally, catalyzes the anti-1,4-elimination of the C-3 phosphate and the C-6 proR hydrogen from 5-enolpyruvylshikimate-3-phosphate (EPSP) to yield chorismate, which is the branch point compound that serves as the starting substrate for the three terminal pathways of aromatic amino acid biosynthesis. This reaction introduces a second double bond into the aromatic ring system. The chain is Chorismate synthase from Legionella pneumophila subsp. pneumophila (strain Philadelphia 1 / ATCC 33152 / DSM 7513).